The chain runs to 289 residues: Ribosomal RNA small subunit methyltransferase A (289 aa).

S-adenosyl-L-methionine-binding residues include N33, V35, G60, E81, D111, and N130.

This sequence belongs to the class I-like SAM-binding methyltransferase superfamily. rRNA adenine N(6)-methyltransferase family. RsmA subfamily.

The protein localises to the cytoplasm. The enzyme catalyses adenosine(1518)/adenosine(1519) in 16S rRNA + 4 S-adenosyl-L-methionine = N(6)-dimethyladenosine(1518)/N(6)-dimethyladenosine(1519) in 16S rRNA + 4 S-adenosyl-L-homocysteine + 4 H(+). In terms of biological role, specifically dimethylates two adjacent adenosines (A1518 and A1519) in the loop of a conserved hairpin near the 3'-end of 16S rRNA in the 30S particle. May play a critical role in biogenesis of 30S subunits. This is Ribosomal RNA small subunit methyltransferase A from Corynebacterium efficiens (strain DSM 44549 / YS-314 / AJ 12310 / JCM 11189 / NBRC 100395).